We begin with the raw amino-acid sequence, 283 residues long: tRNA-cytidine(32) 2-sulfurtransferase (283 aa).

The PP-loop motif motif lies at 49–54 (SGGKDS). The [4Fe-4S] cluster site is built by Cys-124, Cys-127, and Cys-215.

It belongs to the TtcA family. Homodimer. The cofactor is Mg(2+). It depends on [4Fe-4S] cluster as a cofactor.

The protein localises to the cytoplasm. The catalysed reaction is cytidine(32) in tRNA + S-sulfanyl-L-cysteinyl-[cysteine desulfurase] + AH2 + ATP = 2-thiocytidine(32) in tRNA + L-cysteinyl-[cysteine desulfurase] + A + AMP + diphosphate + H(+). It participates in tRNA modification. In terms of biological role, catalyzes the ATP-dependent 2-thiolation of cytidine in position 32 of tRNA, to form 2-thiocytidine (s(2)C32). The sulfur atoms are provided by the cysteine/cysteine desulfurase (IscS) system. The chain is tRNA-cytidine(32) 2-sulfurtransferase from Acaryochloris marina (strain MBIC 11017).